The primary structure comprises 154 residues: Ribosomal RNA large subunit methyltransferase H (154 aa).

Positions 70 and 102 each coordinate S-adenosyl-L-methionine.

Belongs to the RNA methyltransferase RlmH family. As to quaternary structure, homodimer.

Its subcellular location is the cytoplasm. It carries out the reaction pseudouridine(1915) in 23S rRNA + S-adenosyl-L-methionine = N(3)-methylpseudouridine(1915) in 23S rRNA + S-adenosyl-L-homocysteine + H(+). In terms of biological role, specifically methylates the pseudouridine at position 1915 (m3Psi1915) in 23S rRNA. This Hyphomonas neptunium (strain ATCC 15444) protein is Ribosomal RNA large subunit methyltransferase H.